The chain runs to 525 residues: Chromaffin granule amine transporter (525 aa).

The Cytoplasmic portion of the chain corresponds to 1 to 21 (MLRTILDAPQRLLKEGRASRQ). Residues 22–42 (LVLVVVFVALLLDNMLFTVVV) form a helical membrane-spanning segment. Residues 43–138 (PIVPTFLYDM…TGFLEEEITR (96 aa)) are Lumenal, vesicle-facing. 3 N-linked (GlcNAc...) asparagine glycosylation sites follow: Asn-58, Asn-87, and Asn-104. Residues 139–158 (VGVLFASKAVMQLLVNPFVG) form a helical membrane-spanning segment. Residues 159 to 167 (PLTNRIGYH) are Cytoplasmic-facing. A helical transmembrane segment spans residues 168 to 188 (IPMFAGFVIMFLSTVMFAFSG). Over 189–197 (TYTLLFVAR) the chain is Lumenal, vesicle. The chain crosses the membrane as a helical span at residues 198 to 218 (TLQGIGSSFSSVAGLGMLASV). Residues 219 to 227 (YTDDHERGR) are Cytoplasmic-facing. A helical transmembrane segment spans residues 228 to 250 (AMGTALGGLALGLLVGAPFGSVM). The Lumenal, vesicle portion of the chain corresponds to 251–256 (YEFVGK). The helical transmembrane segment at 257–279 (SAPFLILAFLALLDGALQLCILQ) threads the bilayer. At 280–299 (PSKVSPESAKGTPLFMLLKD) the chain is on the cytoplasmic side. Residues 300-319 (PYILVAAGSICFANMGVAIL) traverse the membrane as a helical segment. The Lumenal, vesicle segment spans residues 320–335 (EPTLPIWMMQTMCSPK). Residues 336–360 (WQLGLAFLPASVSYLIGTNLFGVLA) traverse the membrane as a helical segment. The Cytoplasmic portion of the chain corresponds to 361–365 (NKMGR). Residues 366-386 (WLCSLIGMLVVGTSLLCVPLA) form a helical membrane-spanning segment. Residues 387–397 (HNIFGLIGPNA) are Lumenal, vesicle-facing. The helical transmembrane segment at 398–418 (GLGLAIGMVDSSMMPIMGHLV) threads the bilayer. The Cytoplasmic segment spans residues 419–422 (DLRH). Residues 423-443 (TSVYGSVYAIADVAFCMGFAI) traverse the membrane as a helical segment. Topologically, residues 444-448 (GPSTG) are lumenal, vesicle. Residues 449-470 (GAIVKAIGFPWLMVITGVINIV) form a helical membrane-spanning segment. Topologically, residues 471 to 525 (YAPLCYYLRSPPAKEEKLAILSQDCPMETRMYATQKPTKEFPLGEDSDEEPDHEE) are cytoplasmic. Positions 503–525 (ATQKPTKEFPLGEDSDEEPDHEE) are disordered. Acidic residues predominate over residues 513–525 (LGEDSDEEPDHEE).

It belongs to the major facilitator superfamily. Vesicular transporter family. Expressed primarily in neuroendocrine tissues. Highly expressed in chromaffin cells of the adrenal medulla (at protein level). Detected in peripheral sympathetic ganglia (at protein level). Found in some paracrine cells in stomach and duodenum (at protein level). Expressed in substantia nigra. As to expression, expressed in gastrointestinal tract.

It localises to the cytoplasmic vesicle. The protein resides in the secretory vesicle membrane. Its subcellular location is the secretory vesicle. The protein localises to the synaptic vesicle membrane. It is found in the endoplasmic reticulum membrane. It catalyses the reaction serotonin(in) + 2 H(+)(out) = serotonin(out) + 2 H(+)(in). The enzyme catalyses (R)-noradrenaline(in) + 2 H(+)(out) = (R)-noradrenaline(out) + 2 H(+)(in). The catalysed reaction is dopamine(in) + 2 H(+)(out) = dopamine(out) + 2 H(+)(in). Its activity is regulated as follows. Strongly inhibited by reserpine. Also inhibited to a lesser extent by ketanserin and fenfluramine. Not significantly inhibited by tetrabenazine. Electrogenic antiporter that exchanges one cationic monoamine with two intravesicular protons across the membrane of secretory and synaptic vesicles. Uses the electrochemical proton gradient established by the V-type proton-pump ATPase to accumulate high concentrations of monoamines inside the vesicles prior to their release via exocytosis. Transports catecholamines and indolamines with higher affinity for serotonin. Regulates the transvesicular monoaminergic gradient that determines the quantal size. Mediates presynaptic monoaminergic vesicle transport in the amygdala and prefrontal brain regions related with emotion processing in response to environmental stimuli. Functionally, unable to uptake serotonin. The chain is Chromaffin granule amine transporter (SLC18A1) from Homo sapiens (Human).